Consider the following 335-residue polypeptide: DNA-directed RNA polymerase subunit alpha (335 aa).

Residues 1 to 233 are alpha N-terminal domain (alpha-NTD); it reads MIRDEISVSI…DLFIPFLHGE (233 aa). Residues 264–335 form an alpha C-terminal domain (alpha-CTD) region; that stretch reads KEKIAFQLIF…KLFAIDPPRN (72 aa).

Belongs to the RNA polymerase alpha chain family. In plastids the minimal PEP RNA polymerase catalytic core is composed of four subunits: alpha, beta, beta', and beta''. When a (nuclear-encoded) sigma factor is associated with the core the holoenzyme is formed, which can initiate transcription.

The protein localises to the plastid. It localises to the chloroplast. It carries out the reaction RNA(n) + a ribonucleoside 5'-triphosphate = RNA(n+1) + diphosphate. Functionally, DNA-dependent RNA polymerase catalyzes the transcription of DNA into RNA using the four ribonucleoside triphosphates as substrates. The sequence is that of DNA-directed RNA polymerase subunit alpha from Pinus thunbergii (Japanese black pine).